The sequence spans 566 residues: Proline--tRNA ligase (566 aa).

This sequence belongs to the class-II aminoacyl-tRNA synthetase family. ProS type 1 subfamily. Homodimer.

The protein localises to the cytoplasm. The enzyme catalyses tRNA(Pro) + L-proline + ATP = L-prolyl-tRNA(Pro) + AMP + diphosphate. Functionally, catalyzes the attachment of proline to tRNA(Pro) in a two-step reaction: proline is first activated by ATP to form Pro-AMP and then transferred to the acceptor end of tRNA(Pro). As ProRS can inadvertently accommodate and process non-cognate amino acids such as alanine and cysteine, to avoid such errors it has two additional distinct editing activities against alanine. One activity is designated as 'pretransfer' editing and involves the tRNA(Pro)-independent hydrolysis of activated Ala-AMP. The other activity is designated 'posttransfer' editing and involves deacylation of mischarged Ala-tRNA(Pro). The misacylated Cys-tRNA(Pro) is not edited by ProRS. This chain is Proline--tRNA ligase, found in Staphylococcus haemolyticus (strain JCSC1435).